The following is a 112-amino-acid chain: Protein BEX5 (112 aa).

Basic and acidic residues-rich tracts occupy residues 1-12 and 30-51; these read MEKDPKERREEE and PKPR…REDM. Residues 1–56 are disordered; it reads MEKDPKERREEEQAPVQNEEACPMGGGEGPKPRENVRGDWDPPAQDFREDMPNGLV. Residues 101 to 105 are his cluster; it reads HHDHH. Residue Cys109 participates in Zn(2+) binding.

This sequence belongs to the BEX family. Ubiquitinated. Degraded by the proteasome.

It is found in the cytoplasm. The sequence is that of Protein BEX5 (BEX5) from Bos taurus (Bovine).